The following is a 749-amino-acid chain: 5-methyltetrahydropteroyltriglutamate--homocysteine methyltransferase (749 aa).

Residues 15–18 and lysine 114 each bind 5-methyltetrahydropteroyltri-L-glutamate; that span reads RELK. Residues 425-427 and glutamate 478 contribute to the L-homocysteine site; that span reads IGS. Residues 425 to 427 and glutamate 478 contribute to the L-methionine site; that span reads IGS. Residue tryptophan 555 participates in 5-methyltetrahydropteroyltri-L-glutamate binding. An L-homocysteine-binding site is contributed by aspartate 593. Residue aspartate 593 coordinates L-methionine. Glutamate 599 contributes to the 5-methyltetrahydropteroyltri-L-glutamate binding site. Residues histidine 636, cysteine 638, and glutamate 660 each coordinate Zn(2+). The active-site Proton donor is the histidine 689. Residue cysteine 721 participates in Zn(2+) binding.

Belongs to the vitamin-B12 independent methionine synthase family. Zn(2+) is required as a cofactor.

The enzyme catalyses 5-methyltetrahydropteroyltri-L-glutamate + L-homocysteine = tetrahydropteroyltri-L-glutamate + L-methionine. It functions in the pathway amino-acid biosynthesis; L-methionine biosynthesis via de novo pathway; L-methionine from L-homocysteine (MetE route): step 1/1. Functionally, catalyzes the transfer of a methyl group from 5-methyltetrahydrofolate to homocysteine resulting in methionine formation. This is 5-methyltetrahydropteroyltriglutamate--homocysteine methyltransferase from Streptococcus thermophilus (strain ATCC BAA-491 / LMD-9).